The chain runs to 176 residues: Tubulin polymerization-promoting protein family member 3 (176 aa).

Ala2 is modified (N-acetylalanine).

It belongs to the TPPP family.

It localises to the cytoplasm. The protein localises to the cytoskeleton. Regulator of microtubule dynamic that has microtubule bundling activity. Required for embryo implantation; possibly by regulating beta-catenin. Also required for decidualization via regulation of beta-catenin. This Bos taurus (Bovine) protein is Tubulin polymerization-promoting protein family member 3 (TPPP3).